Consider the following 465-residue polypeptide: Lactaldehyde dehydrogenase (465 aa).

220 to 225 (GSVEVG) is an NAD(+) binding site. Active-site residues include E240 and C274.

The protein belongs to the aldehyde dehydrogenase family. As to quaternary structure, homotetramer.

It catalyses the reaction (S)-lactaldehyde + NAD(+) + H2O = (S)-lactate + NADH + 2 H(+). It participates in cofactor biosynthesis; coenzyme F420 biosynthesis. In terms of biological role, involved in F420 biosynthesis through the oxidation of lactaldehyde to lactate. This is Lactaldehyde dehydrogenase from Methanococcus maripaludis (strain DSM 14266 / JCM 13030 / NBRC 101832 / S2 / LL).